The sequence spans 214 residues: Large ribosomal subunit protein uL16 (214 aa).

Residue R32 is modified to Citrulline. Residue K175 forms a Glycyl lysine isopeptide (Lys-Gly) (interchain with G-Cter in SUMO2) linkage. A Glycyl lysine isopeptide (Lys-Gly) (interchain with G-Cter in ubiquitin) cross-link involves residue K188.

This sequence belongs to the universal ribosomal protein uL16 family. Component of the large ribosomal subunit. Mature ribosomes consist of a small (40S) and a large (60S) subunit. The 40S subunit contains about 33 different proteins and 1 molecule of RNA (18S). The 60S subunit contains about 49 different proteins and 3 molecules of RNA (28S, 5.8S and 5S). Post-translationally, citrullinated by PADI4. In terms of processing, ufmylated by UFL1.

The protein resides in the cytoplasm. In terms of biological role, component of the large ribosomal subunit. Plays a role in the formation of actively translating ribosomes. May play a role in the embryonic brain development. The sequence is that of Large ribosomal subunit protein uL16 from Rattus norvegicus (Rat).